A 391-amino-acid polypeptide reads, in one-letter code: Phosphoglycerate kinase (391 aa).

Substrate is bound by residues Asp-23–Asn-25, Arg-38, His-61–Lys-64, Arg-117, and Arg-150. Residues Lys-201, Gly-291, Glu-322, and Gly-348–Ser-351 contribute to the ATP site.

The protein belongs to the phosphoglycerate kinase family. In terms of assembly, monomer.

The protein localises to the cytoplasm. It catalyses the reaction (2R)-3-phosphoglycerate + ATP = (2R)-3-phospho-glyceroyl phosphate + ADP. The protein operates within carbohydrate degradation; glycolysis; pyruvate from D-glyceraldehyde 3-phosphate: step 2/5. The chain is Phosphoglycerate kinase from Clostridium beijerinckii (strain ATCC 51743 / NCIMB 8052) (Clostridium acetobutylicum).